We begin with the raw amino-acid sequence, 148 residues long: Putative pre-16S rRNA nuclease (148 aa).

Belongs to the YqgF nuclease family.

Its subcellular location is the cytoplasm. Functionally, could be a nuclease involved in processing of the 5'-end of pre-16S rRNA. This chain is Putative pre-16S rRNA nuclease, found in Colwellia psychrerythraea (strain 34H / ATCC BAA-681) (Vibrio psychroerythus).